A 374-amino-acid chain; its full sequence is MKISVSKNDLENTLRYLQAFLDKKDASSIASHIHLEVIKEKLFLKASDSDIGLKSYISTQSTDKEGVGTINGKKFLDIISCLKDSNIVLETKDDSLVIKQNKSSFKLPMFDADEFPEFPVIDPKVSLEINAPFLVDAFKKIAPVIEQTSHKRELAGVLMQFNQKHQTLSVVGTDTKRLSYTQLEKISIHSTEEDISCILPKRALLEILKLFYENFSFKSDGMLAVVENETHAFFTKLIDGNYPDYQKILPKEYTSSFTLGKEEFKEGIKLCSSLSSTIKLTLEKNNALFESLDSEHSETAKTSVEIEKGLDIEKAFHLGVNAKFFLEALNALGTTQFVLKCNEPSSPFLIQEPLDEKQSHLNAKISTLMMPITL.

This sequence belongs to the beta sliding clamp family. As to quaternary structure, forms a ring-shaped head-to-tail homodimer around DNA which binds and tethers DNA polymerases and other proteins to the DNA. The DNA replisome complex has a single clamp-loading complex (3 tau and 1 each of delta, delta', psi and chi subunits) which binds 3 Pol III cores (1 core on the leading strand and 2 on the lagging strand) each with a beta sliding clamp dimer. Additional proteins in the replisome are other copies of gamma, psi and chi, Ssb, DNA helicase and RNA primase.

Its subcellular location is the cytoplasm. Confers DNA tethering and processivity to DNA polymerases and other proteins. Acts as a clamp, forming a ring around DNA (a reaction catalyzed by the clamp-loading complex) which diffuses in an ATP-independent manner freely and bidirectionally along dsDNA. Initially characterized for its ability to contact the catalytic subunit of DNA polymerase III (Pol III), a complex, multichain enzyme responsible for most of the replicative synthesis in bacteria; Pol III exhibits 3'-5' exonuclease proofreading activity. The beta chain is required for initiation of replication as well as for processivity of DNA replication. The sequence is that of Beta sliding clamp (dnaN) from Helicobacter pylori (strain J99 / ATCC 700824) (Campylobacter pylori J99).